We begin with the raw amino-acid sequence, 1400 residues long: DNA-directed RNA polymerase subunit beta' (1400 aa).

Cys71, Cys73, Cys86, and Cys89 together coordinate Zn(2+). Mg(2+) is bound by residues Asp462, Asp464, and Asp466. Zn(2+)-binding residues include Cys811, Cys885, Cys892, and Cys895.

It belongs to the RNA polymerase beta' chain family. In terms of assembly, the RNAP catalytic core consists of 2 alpha, 1 beta, 1 beta' and 1 omega subunit. When a sigma factor is associated with the core the holoenzyme is formed, which can initiate transcription. It depends on Mg(2+) as a cofactor. Zn(2+) serves as cofactor.

It carries out the reaction RNA(n) + a ribonucleoside 5'-triphosphate = RNA(n+1) + diphosphate. Functionally, DNA-dependent RNA polymerase catalyzes the transcription of DNA into RNA using the four ribonucleoside triphosphates as substrates. The polypeptide is DNA-directed RNA polymerase subunit beta' (Brucella melitensis biotype 1 (strain ATCC 23456 / CCUG 17765 / NCTC 10094 / 16M)).